We begin with the raw amino-acid sequence, 160 residues long: Protein-export protein SecB (160 aa).

It belongs to the SecB family. As to quaternary structure, homotetramer, a dimer of dimers. One homotetramer interacts with 1 SecA dimer.

Its subcellular location is the cytoplasm. One of the proteins required for the normal export of preproteins out of the cell cytoplasm. It is a molecular chaperone that binds to a subset of precursor proteins, maintaining them in a translocation-competent state. It also specifically binds to its receptor SecA. The sequence is that of Protein-export protein SecB from Rhizobium johnstonii (strain DSM 114642 / LMG 32736 / 3841) (Rhizobium leguminosarum bv. viciae).